The chain runs to 466 residues: Sucrose-6-phosphate hydrolase (466 aa).

Residues 38-41, glutamine 57, 100-101, 159-160, and glutamate 218 each bind substrate; these read LLND, YS, and RD. Aspartate 41 is an active-site residue.

It is found in the cytoplasm. The enzyme catalyses Hydrolysis of terminal non-reducing beta-D-fructofuranoside residues in beta-D-fructofuranosides.. It participates in glycan biosynthesis; sucrose metabolism. Functionally, hydrolyzes sucrose and sucrose-6P, but fails to hydrolyze any of the phosphorylated isomers of sucrose and other phospho-D-glucosides, including maltose-6'P and trehalose-6P. This Klebsiella pneumoniae protein is Sucrose-6-phosphate hydrolase (scrB).